We begin with the raw amino-acid sequence, 751 residues long: Semaphorin-3C (751 aa).

The N-terminal stretch at 1-20 (MAFRTICVLVGVFICSICVK) is a signal peptide. Positions 28–511 (RVYLTFDELR…SNEGVSQVSL (484 aa)) constitute a Sema domain. N-linked (GlcNAc...) asparagine glycosylation occurs at N81. Residues C101 and C112 are joined by a disulfide bond. N-linked (GlcNAc...) asparagine glycosylation is present at N123. The cysteines at positions 130 and 139 are disulfide-linked. Residues N252 and N268 are each glycosylated (N-linked (GlcNAc...) asparagine). Cystine bridges form between C266–C378 and C290–C338. N-linked (GlcNAc...) asparagine glycosylation occurs at N465. A disulfide bridge connects residues C514 and C532. The 85-residue stretch at 571–655 (AYRNAAEIVQ…TENSFKQTIA (85 aa)) folds into the Ig-like C2-type domain. N-linked (GlcNAc...) asparagine glycans are attached at residues N585 and N586. Residues C643 and C709 are joined by a disulfide bond. Over residues 712–731 (TRQQHQQGDESQKMRGDYGK) the composition is skewed to basic and acidic residues. The tract at residues 712-751 (TRQQHQQGDESQKMRGDYGKLKALINSRKSRNRRNQLPES) is disordered.

The protein belongs to the semaphorin family. Interacts with PLXND1. In terms of tissue distribution, expressed intensely in the heart, skeletal muscle, colon, small intestine, ovary, testis, and prostate. Faint expression ubiquitously among other organs, including brain.

The protein localises to the secreted. In terms of biological role, binds to plexin family members and plays an important role in the regulation of developmental processes. Required for normal cardiovascular development during embryogenesis. Functions as attractant for growing axons, and thereby plays an important role in axon growth and axon guidance. The chain is Semaphorin-3C (SEMA3C) from Homo sapiens (Human).